A 455-amino-acid chain; its full sequence is Kynurenine 3-monooxygenase (455 aa).

Belongs to the aromatic-ring hydroxylase family. KMO subfamily. Requires FAD as cofactor.

It carries out the reaction L-kynurenine + NADPH + O2 + H(+) = 3-hydroxy-L-kynurenine + NADP(+) + H2O. It functions in the pathway cofactor biosynthesis; NAD(+) biosynthesis; quinolinate from L-kynurenine: step 1/3. In terms of biological role, catalyzes the hydroxylation of L-kynurenine (L-Kyn) to form 3-hydroxy-L-kynurenine (L-3OHKyn). Required for synthesis of quinolinic acid. The polypeptide is Kynurenine 3-monooxygenase (Xanthomonas oryzae pv. oryzae (strain KACC10331 / KXO85)).